The primary structure comprises 293 residues: Cytidine deaminase 8 (293 aa).

2 consecutive CMP/dCMP-type deaminase domains span residues 20–151 and 181–293; these read FTPQ…LISQ and EHCN…LHCK. Position 61-63 (61-63) interacts with substrate; sequence NVE. Zn(2+) is bound at residue H74. The active-site Proton donor is E76. 2 residues coordinate Zn(2+): C107 and C110.

It belongs to the cytidine and deoxycytidylate deaminase family. Homodimer. Requires Zn(2+) as cofactor.

The enzyme catalyses cytidine + H2O + H(+) = uridine + NH4(+). It carries out the reaction 2'-deoxycytidine + H2O + H(+) = 2'-deoxyuridine + NH4(+). Functionally, this enzyme scavenges exogenous and endogenous cytidine and 2'-deoxycytidine for UMP synthesis. In Arabidopsis thaliana (Mouse-ear cress), this protein is Cytidine deaminase 8 (CDA8).